The following is a 249-amino-acid chain: Tetraspanin-7 (249 aa).

Topologically, residues 1 to 16 are cytoplasmic; sequence MASRRMETKPVITCLK. A helical transmembrane segment spans residues 17 to 40; that stretch reads TLLIIYSFVFWITGVILLAVGVWG. Residues 41-56 are Extracellular-facing; it reads KLTLGTYISLIAENST. Asn54 is a glycosylation site (N-linked (GlcNAc...) asparagine). A helical transmembrane segment spans residues 57–75; it reads NAPYVLIGTGTTIVVFGLF. At 76–86 the chain is on the cytoplasmic side; it reads GCFATCRGSPW. The chain crosses the membrane as a helical span at residues 87–112; sequence MLKLYAMFLSLVFLAELVAGISGFVF. Over 113–213 the chain is Extracellular; sequence RHEIKDTFLR…LVTSFMETNM (101 aa). Residues Asn155, Asn158, Asn177, and Asn188 are each glycosylated (N-linked (GlcNAc...) asparagine). A helical transmembrane segment spans residues 214–234; sequence GIIAGVAFGIAFSQLIGMLLA. The Cytoplasmic portion of the chain corresponds to 235-249; that stretch reads CCLSRFITANQYEMV.

It belongs to the tetraspanin (TM4SF) family. In terms of assembly, (Microbial infection) Interacts with herpes simplex virus 1 (HHV-1) UL35. As to expression, not solely expressed in T-cells. Expressed in acute myelocytic leukemia cells of some patients.

It is found in the membrane. Functionally, may be involved in cell proliferation and cell motility. This Homo sapiens (Human) protein is Tetraspanin-7 (TSPAN7).